A 467-amino-acid chain; its full sequence is ATP synthase subunit beta (467 aa).

Residue 150–157 (GGAGVGKT) coordinates ATP.

This sequence belongs to the ATPase alpha/beta chains family. F-type ATPases have 2 components, CF(1) - the catalytic core - and CF(0) - the membrane proton channel. CF(1) has five subunits: alpha(3), beta(3), gamma(1), delta(1), epsilon(1). CF(0) has three main subunits: a(1), b(2) and c(9-12). The alpha and beta chains form an alternating ring which encloses part of the gamma chain. CF(1) is attached to CF(0) by a central stalk formed by the gamma and epsilon chains, while a peripheral stalk is formed by the delta and b chains.

The protein localises to the cell inner membrane. It carries out the reaction ATP + H2O + 4 H(+)(in) = ADP + phosphate + 5 H(+)(out). Its function is as follows. Produces ATP from ADP in the presence of a proton gradient across the membrane. The catalytic sites are hosted primarily by the beta subunits. This Vibrio vulnificus (strain YJ016) protein is ATP synthase subunit beta.